Consider the following 61-residue polypeptide: Small ribosomal subunit protein uS14 (61 aa).

Zn(2+)-binding residues include Cys24, Cys27, Cys40, and Cys43.

The protein belongs to the universal ribosomal protein uS14 family. Zinc-binding uS14 subfamily. Part of the 30S ribosomal subunit. Contacts proteins S3 and S10. The cofactor is Zn(2+).

Its function is as follows. Binds 16S rRNA, required for the assembly of 30S particles and may also be responsible for determining the conformation of the 16S rRNA at the A site. This chain is Small ribosomal subunit protein uS14, found in Helicobacter pylori (strain G27).